A 540-amino-acid chain; its full sequence is Tyrosinase (540 aa).

The signal sequence occupies residues 1–19 (MKSLFLSAVLLQFFETCWS). The Lumenal, melanosome segment spans residues 20-480 (QFPRPCANSE…LQQAQQIWQW (461 aa)). Asn87 carries N-linked (GlcNAc...) asparagine glycosylation. His182, His205, and His214 together coordinate Cu cation. 3 N-linked (GlcNAc...) asparagine glycosylation sites follow: Asn233, Asn293, and Asn340. Cu cation is bound by residues His366 and His370. N-linked (GlcNAc...) asparagine glycosylation is present at Asn374. His393 contacts Cu cation. Residues 481–501 (LLGAGILGALIATIVAAVIVF) traverse the membrane as a helical segment. The Cytoplasmic segment spans residues 502–540 (ARRKRRRNQKRKRAPSFGERQPLLQSSSEEGSSSYQTTL). Residues 511–540 (KRKRAPSFGERQPLLQSSSEEGSSSYQTTL) are disordered. The span at 527–540 (SSSEEGSSSYQTTL) shows a compositional bias: low complexity.

The protein belongs to the tyrosinase family. It depends on Cu(2+) as a cofactor.

It localises to the melanosome membrane. The catalysed reaction is 2 L-dopa + O2 = 2 L-dopaquinone + 2 H2O. It carries out the reaction L-tyrosine + O2 = L-dopaquinone + H2O. Its function is as follows. This is a copper-containing oxidase that functions in the formation of pigments such as melanins and other polyphenolic compounds. The protein is Tyrosinase (tyr) of Oryzias latipes (Japanese rice fish).